A 202-amino-acid polypeptide reads, in one-letter code: CASP-like protein 2B1 (202 aa).

The Cytoplasmic segment spans residues 1 to 29; the sequence is MSYLGVGVSPGNVPVYHGTNSKVIDRRVR. A helical membrane pass occupies residues 30-50; that stretch reads LAELVLRCVICCLGVLAAVLV. Over 51–72 the chain is Extracellular; the sequence is GTDTQVKEIFSIQKKARFTDMK. A helical transmembrane segment spans residues 73-93; sequence ALVFLVAANGIAAAYSFVQGV. The Cytoplasmic portion of the chain corresponds to 94–109; the sequence is RCVVGMVKGSVLFSKP. A helical membrane pass occupies residues 110–132; sequence LAWVIFSGDQMMAYLTMSAVAAA. Residues 133 to 164 are Extracellular-facing; sequence AQSSVFAKLGQPDLQWMKICTMYGKFCNQVGE. The chain crosses the membrane as a helical span at residues 165–185; the sequence is GIASALLVSVSMVVLSCISAF. The Cytoplasmic portion of the chain corresponds to 186 to 202; the sequence is SLFRLYGGNKGKDGARW.

Belongs to the Casparian strip membrane proteins (CASP) family. As to quaternary structure, homodimer and heterodimers.

It is found in the cell membrane. This is CASP-like protein 2B1 from Populus trichocarpa (Western balsam poplar).